We begin with the raw amino-acid sequence, 364 residues long: Chorismate synthase (364 aa).

NADP(+) is bound by residues R48 and R54. FMN contacts are provided by residues 125-127 (RSS), G282, 297-301 (KPPAS), and R323.

The protein belongs to the chorismate synthase family. Homotetramer. The cofactor is FMNH2.

It catalyses the reaction 5-O-(1-carboxyvinyl)-3-phosphoshikimate = chorismate + phosphate. Its pathway is metabolic intermediate biosynthesis; chorismate biosynthesis; chorismate from D-erythrose 4-phosphate and phosphoenolpyruvate: step 7/7. Catalyzes the anti-1,4-elimination of the C-3 phosphate and the C-6 proR hydrogen from 5-enolpyruvylshikimate-3-phosphate (EPSP) to yield chorismate, which is the branch point compound that serves as the starting substrate for the three terminal pathways of aromatic amino acid biosynthesis. This reaction introduces a second double bond into the aromatic ring system. This Chloroflexus aurantiacus (strain ATCC 29366 / DSM 635 / J-10-fl) protein is Chorismate synthase.